The sequence spans 94 residues: Protein FAM24B (94 aa).

A signal peptide spans 1–21; it reads MPVIAGGILAALLLLIVVVLC.

It belongs to the FAM24 family.

Its subcellular location is the secreted. This is Protein FAM24B (FAM24B) from Homo sapiens (Human).